Consider the following 431-residue polypeptide: 3-phosphoshikimate 1-carboxyvinyltransferase (431 aa).

3-phosphoshikimate-binding residues include K23, S24, and R28. K23 lines the phosphoenolpyruvate pocket. Positions 96 and 124 each coordinate phosphoenolpyruvate. Positions 169, 171, 317, and 344 each coordinate 3-phosphoshikimate. Q171 is a phosphoenolpyruvate binding site. The active-site Proton acceptor is the D317. Phosphoenolpyruvate is bound by residues R348 and R390.

Belongs to the EPSP synthase family. Monomer.

Its subcellular location is the cytoplasm. It carries out the reaction 3-phosphoshikimate + phosphoenolpyruvate = 5-O-(1-carboxyvinyl)-3-phosphoshikimate + phosphate. It functions in the pathway metabolic intermediate biosynthesis; chorismate biosynthesis; chorismate from D-erythrose 4-phosphate and phosphoenolpyruvate: step 6/7. Catalyzes the transfer of the enolpyruvyl moiety of phosphoenolpyruvate (PEP) to the 5-hydroxyl of shikimate-3-phosphate (S3P) to produce enolpyruvyl shikimate-3-phosphate and inorganic phosphate. The chain is 3-phosphoshikimate 1-carboxyvinyltransferase from Syntrophotalea carbinolica (strain DSM 2380 / NBRC 103641 / GraBd1) (Pelobacter carbinolicus).